A 295-amino-acid chain; its full sequence is ER-localized J domain-containing protein 5 (295 aa).

The signal sequence occupies residues 1 to 20 (MNGYWKPALVVLGLVSLSYA). The Lumenal segment spans residues 21–130 (FTTIETEIFQ…GFYFSRMKPK (110 aa)). The region spanning 42 to 110 (DMNFYKFLKL…RKIYDYYLQN (69 aa)) is the J domain. Residues 131–151 (TWFLLAFIWIVVNIGQYIISI) traverse the membrane as a helical segment. The Cytoplasmic segment spans residues 152 to 295 (IQYRSQRSRI…PNGKVIYSRK (144 aa)). Residues 259–287 (KYDGNQTKKGNKVKKGSAKKGQKKMELPN) are disordered. Positions 267 to 280 (KGNKVKKGSAKKGQ) are enriched in basic residues.

Belongs to the DnaJ family.

The protein localises to the endoplasmic reticulum membrane. In terms of biological role, dnaJ-like chaperone required for the folding capacity of the endoplasmic reticulum. The protein is ER-localized J domain-containing protein 5 (ERJ5) of Saccharomyces cerevisiae (strain ATCC 204508 / S288c) (Baker's yeast).